Here is a 183-residue protein sequence, read N- to C-terminus: Adenine phosphoribosyltransferase (183 aa).

It belongs to the purine/pyrimidine phosphoribosyltransferase family. Homodimer.

The protein localises to the cytoplasm. The enzyme catalyses AMP + diphosphate = 5-phospho-alpha-D-ribose 1-diphosphate + adenine. The protein operates within purine metabolism; AMP biosynthesis via salvage pathway; AMP from adenine: step 1/1. In terms of biological role, catalyzes a salvage reaction resulting in the formation of AMP, that is energically less costly than de novo synthesis. In Shigella flexneri serotype 5b (strain 8401), this protein is Adenine phosphoribosyltransferase.